We begin with the raw amino-acid sequence, 189 residues long: Interferon alpha-14 (189 aa).

A signal peptide spans 1-23; that stretch reads MALPFALMMALVVLSCKSSCSLG. 2 cysteine pairs are disulfide-bonded: Cys24–Cys122 and Cys52–Cys162. A glycan (N-linked (GlcNAc...) asparagine) is linked at Asn95.

This sequence belongs to the alpha/beta interferon family.

The protein resides in the secreted. Produced by macrophages, IFN-alpha have antiviral activities. Interferon stimulates the production of two enzymes: a protein kinase and an oligoadenylate synthetase. This chain is Interferon alpha-14 (IFNA14), found in Homo sapiens (Human).